Here is a 32-residue protein sequence, read N- to C-terminus: ilv operon leader peptide (32 aa).

This chain is ilv operon leader peptide (ilvL), found in Edwardsiella tarda.